The following is a 177-amino-acid chain: Large ribosomal subunit protein uL6 (177 aa).

The segment at 154-177 (PEPYKGKGVRYADEQVRRKEAKKK) is disordered. Positions 155–171 (EPYKGKGVRYADEQVRR) are enriched in basic and acidic residues.

It belongs to the universal ribosomal protein uL6 family. As to quaternary structure, part of the 50S ribosomal subunit.

This protein binds to the 23S rRNA, and is important in its secondary structure. It is located near the subunit interface in the base of the L7/L12 stalk, and near the tRNA binding site of the peptidyltransferase center. The chain is Large ribosomal subunit protein uL6 from Alcanivorax borkumensis (strain ATCC 700651 / DSM 11573 / NCIMB 13689 / SK2).